The primary structure comprises 131 residues: Large ribosomal subunit protein bL19 (131 aa).

The protein belongs to the bacterial ribosomal protein bL19 family.

Its function is as follows. This protein is located at the 30S-50S ribosomal subunit interface and may play a role in the structure and function of the aminoacyl-tRNA binding site. In Caulobacter sp. (strain K31), this protein is Large ribosomal subunit protein bL19.